Here is a 59-residue protein sequence, read N- to C-terminus: Large ribosomal subunit protein uL30 (59 aa).

It belongs to the universal ribosomal protein uL30 family. In terms of assembly, part of the 50S ribosomal subunit.

The protein is Large ribosomal subunit protein uL30 of Stutzerimonas stutzeri (strain A1501) (Pseudomonas stutzeri).